The following is a 226-amino-acid chain: uncharacterized protein (226 aa).

An HTH arsR-type domain is found at 1–92 (MNPNIAKISS…QLLHIAPKAK (92 aa)). The segment at residues 32–55 (AGELAYLANIKPQTASFHLNKLLE) is a DNA-binding region (H-T-H motif).

This is an uncharacterized protein from Bacillus subtilis (strain 168).